The primary structure comprises 367 residues: MTSRNYLLLTPGPLTTSRTVKEAMLFDSCTWDDDYNIGVVEQIRQQLTALATASEGYTSVLLQGSGSYAVEAVLGSALGPQDKVLIVSNGAYGARMVEMAGLMGIAHHAYDCGEVARPDVQAIDAILNADPTISHIAMVHSETTTGMLNPIDEVGALAHRYGKTYIVDAMSSFGGIPMDIAALHIDYLISSANKCIQGVPGFAFVIAREQKLAACKGHSRSLSLDLYAQWRCMEDNHGKWRFTSPTHTVLAFAQALKELAKEGGVAARHQRYQQNQRSLVAGMRALGFNTLLDDELHSPIITAFYSPEDPQYRFSEFYRRLKEQGFVIYPGKVSQSDCFRIGNIGEVYAADITALLTAIRTAMYWTK.

Pyridoxal 5'-phosphate is bound by residues 65 to 67 (SGS), tyrosine 92, threonine 143, and aspartate 168. Position 194 is an N6-(pyridoxal phosphate)lysine (lysine 194). A pyridoxal 5'-phosphate-binding site is contributed by threonine 243.

The protein belongs to the class-V pyridoxal-phosphate-dependent aminotransferase family. PhnW subfamily. Homodimer. Requires pyridoxal 5'-phosphate as cofactor.

It carries out the reaction (2-aminoethyl)phosphonate + pyruvate = phosphonoacetaldehyde + L-alanine. In terms of biological role, involved in phosphonate degradation. The sequence is that of 2-aminoethylphosphonate--pyruvate transaminase (phnW) from Salmonella typhimurium (strain LT2 / SGSC1412 / ATCC 700720).